A 114-amino-acid chain; its full sequence is Beta-microseminoprotein J1 (114 aa).

The signal sequence occupies residues 1–20; sequence MNVLLGGLVIFATFVTLCNA. Intrachain disulfides connect Cys-22–Cys-70, Cys-38–Cys-62, Cys-57–Cys-93, Cys-60–Cys-69, and Cys-84–Cys-107.

Belongs to the beta-microseminoprotein family.

It is found in the secreted. This is Beta-microseminoprotein J1 (MSPJ) from Saguinus oedipus (Cotton-top tamarin).